The primary structure comprises 999 residues: Tyrosine-protein kinase Mer (999 aa).

The N-terminal stretch at 1–20 (MGPAPLPLLLGLFLPALWRR) is a signal peptide. Residues 21–505 (AITEAREEAK…PGNADPVLII (485 aa)) are Extracellular-facing. 2 consecutive Ig-like C2-type domains span residues 81 to 186 (PQVT…EIVS) and 197 to 273 (PHFT…LTVS). 14 N-linked (GlcNAc...) asparagine glycosylation sites follow: asparagine 114, asparagine 170, asparagine 207, asparagine 215, asparagine 234, asparagine 294, asparagine 316, asparagine 329, asparagine 336, asparagine 354, asparagine 389, asparagine 395, asparagine 442, and asparagine 454. A disulfide bridge connects residues cysteine 115 and cysteine 175. Cysteine 218 and cysteine 262 are joined by a disulfide. Fibronectin type-III domains lie at 286–381 (PPTE…TTEG) and 386–484 (APLN…PAHG). The chain crosses the membrane as a helical span at residues 506-526 (FGCFCGFILIGLILYISLAIR). At 527–999 (KRVQETKFGN…DSSEGSEVLM (473 aa)) the chain is on the cytoplasmic side. The residue at position 543 (serine 543) is a Phosphoserine. The 272-residue stretch at 587–858 (LILGKILGEG…VLRLQLEKLL (272 aa)) folds into the Protein kinase domain. ATP contacts are provided by residues 593–601 (LGEGEFGSV) and lysine 615. Aspartate 723 (proton acceptor) is an active-site residue. 4 positions are modified to phosphotyrosine; by autocatalysis: tyrosine 749, tyrosine 753, tyrosine 754, and tyrosine 872. Serine 935 carries the phosphoserine modification.

The protein belongs to the protein kinase superfamily. Tyr protein kinase family. AXL/UFO subfamily. Interacts (upon activation) with TNK2; stimulates TNK2 autophosphorylation. Interacts (via N-terminus) with extracellular ligands LGALS3, TUB, TULP1 and GAS6. Interacts with VAV1 in a phosphotyrosine-independent manner. Interacts with TIMD4; this interaction enhances TIMD4-mediated efferocytosis. In terms of processing, autophosphorylated on Tyr-749, Tyr-753 and Tyr-754 in the activation loop allowing full activity. Autophosphorylated on Tyr-872 leading to recruitment of downstream partners of the signaling cascade such as PLCG2. Not expressed in normal B- and T-lymphocytes but is expressed in numerous neoplastic B- and T-cell lines. Highly expressed in testis, ovary, prostate, lung, and kidney, with lower expression in spleen, small intestine, colon, and liver.

It is found in the cell membrane. It catalyses the reaction L-tyrosyl-[protein] + ATP = O-phospho-L-tyrosyl-[protein] + ADP + H(+). Functionally, receptor tyrosine kinase that transduces signals from the extracellular matrix into the cytoplasm by binding to several ligands including LGALS3, TUB, TULP1 or GAS6. Regulates many physiological processes including cell survival, migration, differentiation, and phagocytosis of apoptotic cells (efferocytosis). Ligand binding at the cell surface induces autophosphorylation of MERTK on its intracellular domain that provides docking sites for downstream signaling molecules. Following activation by ligand, interacts with GRB2 or PLCG2 and induces phosphorylation of MAPK1, MAPK2, FAK/PTK2 or RAC1. MERTK signaling plays a role in various processes such as macrophage clearance of apoptotic cells, platelet aggregation, cytoskeleton reorganization and engulfment. Functions in the retinal pigment epithelium (RPE) as a regulator of rod outer segments fragments phagocytosis. Also plays an important role in inhibition of Toll-like receptors (TLRs)-mediated innate immune response by activating STAT1, which selectively induces production of suppressors of cytokine signaling SOCS1 and SOCS3. The chain is Tyrosine-protein kinase Mer (MERTK) from Homo sapiens (Human).